Here is a 154-residue protein sequence, read N- to C-terminus: MVIPSNTTVYVDADSCPVKEEVISLARTFGKKMVFVYSYAHTMSLPKDVETAIVDTSKEAADLYLLQSVNRGDVCVTQDHALASLLLVKGVIVLSPRGHVYKEEEMPAMLAWRHTSQKARRAGKKTRGPKKFTASDRAAFYHALYAVLEKIAKE.

This sequence belongs to the UPF0178 family.

This is UPF0178 protein ABC1688 from Shouchella clausii (strain KSM-K16) (Alkalihalobacillus clausii).